The following is a 216-amino-acid chain: Probable nicotinate-nucleotide adenylyltransferase (216 aa).

It belongs to the NadD family.

It carries out the reaction nicotinate beta-D-ribonucleotide + ATP + H(+) = deamido-NAD(+) + diphosphate. The protein operates within cofactor biosynthesis; NAD(+) biosynthesis; deamido-NAD(+) from nicotinate D-ribonucleotide: step 1/1. Catalyzes the reversible adenylation of nicotinate mononucleotide (NaMN) to nicotinic acid adenine dinucleotide (NaAD). The protein is Probable nicotinate-nucleotide adenylyltransferase of Geobacter metallireducens (strain ATCC 53774 / DSM 7210 / GS-15).